The sequence spans 224 residues: LRP chaperone MESD (224 aa).

The first 29 residues, 1–29 (MAASRWLRAVLLFLCASDLLLLPPPNAYA), serve as a signal peptide directing secretion. Positions 1–155 (MAASRWLRAV…DRAIFMLRDG (155 aa)) are chaperone domain. Disordered stretches follow at residues 28–49 (YAAD…IRDY) and 178–224 (GQMY…REDL). The tract at residues 156–195 (SYAWEIKDFLVSQDRCAEVTLEGQMYPGKGGGSKEKNKTK) is escort domain. The segment covering 187–224 (GSKEKNKTKPEKAKKKEGDPKPRASKEDNRAGSRREDL) has biased composition (basic and acidic residues). An N-linked (GlcNAc...) asparagine glycan is attached at asparagine 192. Positions 221–224 (REDL) match the Prevents secretion from ER motif.

Belongs to the MESD family. In terms of assembly, monomer. Interacts with LRP5; the interaction prevents LRP5 from forming aggregates and chaperones LRP6 to the plasma membrane. Interacts with LRP6; the interaction prevents LRP6 from forming aggregates and chaperones LRP6 to the plasma membrane. Interacts with LRP4; the interaction promotes glycosylation of LRP4 and its cell-surface expression. Expressed in many tissues, but not in skeletal muscles. In the retina expressed in retinal ganglion cells, inner and outer plexiform layers, photoreceptor inner and outer segments and retinal pigment epithelium (at protein level).

The protein resides in the endoplasmic reticulum. Its function is as follows. Chaperone specifically assisting the folding of beta-propeller/EGF modules within the family of low-density lipoprotein receptors (LDLRs). Acts as a modulator of the Wnt pathway through chaperoning the coreceptors of the canonical Wnt pathway, LRP5 and LRP6, to the plasma membrane. Essential for specification of embryonic polarity and mesoderm induction. Plays an essential role in neuromuscular junction (NMJ) formation by promoting cell-surface expression of LRP4. May regulate phagocytosis of apoptotic retinal pigment epithelium (RPE) cells. The chain is LRP chaperone MESD from Mus musculus (Mouse).